A 128-amino-acid polypeptide reads, in one-letter code: Ribonuclease pancreatic (128 aa).

Residues 1–13 (KESPAMKFERQHM) are compositionally biased toward basic and acidic residues. Residues 1–26 (KESPAMKFERQHMDSGSTSSSNPTYC) are disordered. Residues Lys7 and Arg10 each coordinate substrate. Catalysis depends on His12, which acts as the Proton acceptor. Positions 14 to 26 (DSGSTSSSNPTYC) are enriched in polar residues. 4 cysteine pairs are disulfide-bonded: Cys26-Cys84, Cys40-Cys95, Cys58-Cys110, and Cys65-Cys72. A glycan (N-linked (GlcNAc...) asparagine) is linked at Asn34. 41–45 (KPVNT) is a substrate binding site. Residue Asn62 is glycosylated (N-linked (GlcNAc...) asparagine). Positions 66 and 85 each coordinate substrate. Residue His119 is the Proton donor of the active site.

Belongs to the pancreatic ribonuclease family. As to quaternary structure, monomer. Interacts with and forms tight 1:1 complexes with RNH1. Dimerization of two such complexes may occur. Interaction with RNH1 inhibits this protein. In terms of tissue distribution, pancreas.

The protein localises to the secreted. The enzyme catalyses an [RNA] containing cytidine + H2O = an [RNA]-3'-cytidine-3'-phosphate + a 5'-hydroxy-ribonucleotide-3'-[RNA].. The catalysed reaction is an [RNA] containing uridine + H2O = an [RNA]-3'-uridine-3'-phosphate + a 5'-hydroxy-ribonucleotide-3'-[RNA].. Functionally, endonuclease that catalyzes the cleavage of RNA on the 3' side of pyrimidine nucleotides. Acts on single-stranded and double-stranded RNA. The protein is Ribonuclease pancreatic (RNASE1) of Equus caballus (Horse).